Consider the following 147-residue polypeptide: Nucleoside diphosphate kinase (147 aa).

The ATP site is built by Lys-11, Phe-59, Arg-87, Thr-93, Arg-104, and Asn-114. His-117 (pros-phosphohistidine intermediate) is an active-site residue.

Belongs to the NDK family. Homotetramer. Mg(2+) is required as a cofactor.

The protein localises to the cytoplasm. The catalysed reaction is a 2'-deoxyribonucleoside 5'-diphosphate + ATP = a 2'-deoxyribonucleoside 5'-triphosphate + ADP. It carries out the reaction a ribonucleoside 5'-diphosphate + ATP = a ribonucleoside 5'-triphosphate + ADP. Major role in the synthesis of nucleoside triphosphates other than ATP. The ATP gamma phosphate is transferred to the NDP beta phosphate via a ping-pong mechanism, using a phosphorylated active-site intermediate. The sequence is that of Nucleoside diphosphate kinase from Anaeromyxobacter dehalogenans (strain 2CP-C).